We begin with the raw amino-acid sequence, 197 residues long: Recombination protein RecR (197 aa).

The segment at 57 to 72 (CSVCFALTEQNPCPIC) adopts a C4-type zinc-finger fold. The region spanning 79 to 174 (SVICVVETSQ…RVTRLAHGIP (96 aa)) is the Toprim domain.

This sequence belongs to the RecR family.

In terms of biological role, may play a role in DNA repair. It seems to be involved in an RecBC-independent recombinational process of DNA repair. It may act with RecF and RecO. The sequence is that of Recombination protein RecR from Trichlorobacter lovleyi (strain ATCC BAA-1151 / DSM 17278 / SZ) (Geobacter lovleyi).